Reading from the N-terminus, the 122-residue chain is Large ribosomal subunit protein uL14 (122 aa).

It belongs to the universal ribosomal protein uL14 family. Part of the 50S ribosomal subunit. Forms a cluster with proteins L3 and L19. In the 70S ribosome, L14 and L19 interact and together make contacts with the 16S rRNA in bridges B5 and B8.

In terms of biological role, binds to 23S rRNA. Forms part of two intersubunit bridges in the 70S ribosome. In Thioalkalivibrio sulfidiphilus (strain HL-EbGR7), this protein is Large ribosomal subunit protein uL14.